The primary structure comprises 144 residues: Galectin b (144 aa).

The Galectin domain maps to aspartate 1–valine 138.

Lectin that binds beta-galactoside and a wide array of complex carbohydrates. This is Galectin b from Aplysina lactuca (Marine sponge).